The sequence spans 187 residues: UPF0398 protein LJ_1195 (187 aa).

This sequence belongs to the UPF0398 family.

This Lactobacillus johnsonii (strain CNCM I-12250 / La1 / NCC 533) protein is UPF0398 protein LJ_1195.